The sequence spans 176 residues: NAD(P)H-quinone oxidoreductase subunit 6, chloroplastic (176 aa).

5 helical membrane passes run 10–30 (FLLV…VLLA), 32–52 (PIYS…FYIL), 61–81 (AQLL…VMFI), 92–112 (LWTV…VSLI), and 152–172 (FFIP…GAIA).

It belongs to the complex I subunit 6 family. NDH is composed of at least 16 different subunits, 5 of which are encoded in the nucleus.

Its subcellular location is the plastid. It localises to the chloroplast thylakoid membrane. The enzyme catalyses a plastoquinone + NADH + (n+1) H(+)(in) = a plastoquinol + NAD(+) + n H(+)(out). It catalyses the reaction a plastoquinone + NADPH + (n+1) H(+)(in) = a plastoquinol + NADP(+) + n H(+)(out). In terms of biological role, NDH shuttles electrons from NAD(P)H:plastoquinone, via FMN and iron-sulfur (Fe-S) centers, to quinones in the photosynthetic chain and possibly in a chloroplast respiratory chain. The immediate electron acceptor for the enzyme in this species is believed to be plastoquinone. Couples the redox reaction to proton translocation, and thus conserves the redox energy in a proton gradient. The sequence is that of NAD(P)H-quinone oxidoreductase subunit 6, chloroplastic (ndhG) from Helianthus annuus (Common sunflower).